We begin with the raw amino-acid sequence, 457 residues long: Solute carrier family 38 member 6 (457 aa).

An N-acetylmethionine modification is found at Met1. Phosphoserine is present on residues Ser4 and Ser7. 5 helical membrane passes run 48–68, 70–90, 112–132, 171–191, and 192–212; these read FGLS…LGLA, VMAN…ALLA, LGLF…IIIQ, LLII…KIGF, and LGYT…VVVI. A disulfide bridge links Cys219 with Cys239. The next 6 membrane-spanning stretches (helical) occupy residues 251–271, 289–309, 328–348, 372–392, 395–415, and 432–452; these read VYAI…LPIY, AIAL…LTFY, VIVM…APLI, SLTT…VPDI, VFGV…PGLF, and ALFL…LIIF.

It belongs to the amino acid/polyamine transporter 2 family. In terms of tissue distribution, expressed exclusively in neurons and not in astrocytes and glia cells. Highly expressed in the synapse. Highly expressed in glutamatergic neurons. Primarily expressed in excitatory neurons, with some minor expression in inhibitory neurons.

The protein resides in the cell membrane. It localises to the synapse. The enzyme catalyses L-glutamine(out) = L-glutamine(in). The catalysed reaction is L-glutamate(out) = L-glutamate(in). Functionally, amino acid transporter with an apparent selectivity for L-glutamine and L-glutamate. May facilitate glutamine uptake in excitatory neurons. The transport mechanism remains to be elucidated. The polypeptide is Solute carrier family 38 member 6 (Mus musculus (Mouse)).